Consider the following 450-residue polypeptide: Probable glycine dehydrogenase (decarboxylating) subunit 1 (450 aa).

The protein belongs to the GcvP family. N-terminal subunit subfamily. The glycine cleavage system is composed of four proteins: P, T, L and H. In this organism, the P 'protein' is a heterodimer of two subunits.

It carries out the reaction N(6)-[(R)-lipoyl]-L-lysyl-[glycine-cleavage complex H protein] + glycine + H(+) = N(6)-[(R)-S(8)-aminomethyldihydrolipoyl]-L-lysyl-[glycine-cleavage complex H protein] + CO2. Functionally, the glycine cleavage system catalyzes the degradation of glycine. The P protein binds the alpha-amino group of glycine through its pyridoxal phosphate cofactor; CO(2) is released and the remaining methylamine moiety is then transferred to the lipoamide cofactor of the H protein. This Desulfotalea psychrophila (strain LSv54 / DSM 12343) protein is Probable glycine dehydrogenase (decarboxylating) subunit 1.